We begin with the raw amino-acid sequence, 226 residues long: Hand transcription factor 1 (226 aa).

The segment covering 1–15 has biased composition (polar residues); the sequence is MVKSTTAGNNAVSSL. The disordered stretch occupies residues 1–35; the sequence is MVKSTTAGNNAVSSLESTDSKKSRKEKSREKEHRR. A basic motif region spans residues 23–36; the sequence is SRKEKSREKEHRRA. Residues 23–77 form the bHLH domain; that stretch reads SRKEKSREKEHRRAQCINSAFEILQQHIPYLKSEERKSLPKIKTLRLAMQYIDHL. The tract at residues 37–77 is helix-loop-helix motif; the sequence is QCINSAFEILQQHIPYLKSEERKSLPKIKTLRLAMQYIDHL.

The protein localises to the nucleus. In terms of biological role, probable transcription factor which regulates early embryonic myogenesis, in cooperation with transcription factors unc-120 and hlh-1. Involved in controlling the number and position of somatic gonadal precursor cells (SGPs) in the gonadal primordium, and embryonic body shape. The protein is Hand transcription factor 1 of Caenorhabditis elegans.